Reading from the N-terminus, the 293-residue chain is Elongation factor Ts (293 aa).

Residues 79–82 form an involved in Mg(2+) ion dislocation from EF-Tu region; sequence TDFV. Phosphoserine is present on Ser149.

This sequence belongs to the EF-Ts family.

The protein resides in the cytoplasm. In terms of biological role, associates with the EF-Tu.GDP complex and induces the exchange of GDP to GTP. It remains bound to the aminoacyl-tRNA.EF-Tu.GTP complex up to the GTP hydrolysis stage on the ribosome. This is Elongation factor Ts (tsf) from Bacillus subtilis (strain 168).